Consider the following 432-residue polypeptide: Enolase (432 aa).

Gln163 is a binding site for (2R)-2-phosphoglycerate. Glu205 (proton donor) is an active-site residue. Residues Asp242, Glu285, and Asp312 each coordinate Mg(2+). 4 residues coordinate (2R)-2-phosphoglycerate: Lys337, Arg366, Ser367, and Lys388. The Proton acceptor role is filled by Lys337.

Belongs to the enolase family. Mg(2+) is required as a cofactor.

The protein localises to the cytoplasm. The protein resides in the secreted. Its subcellular location is the cell surface. It catalyses the reaction (2R)-2-phosphoglycerate = phosphoenolpyruvate + H2O. The protein operates within carbohydrate degradation; glycolysis; pyruvate from D-glyceraldehyde 3-phosphate: step 4/5. Catalyzes the reversible conversion of 2-phosphoglycerate (2-PG) into phosphoenolpyruvate (PEP). It is essential for the degradation of carbohydrates via glycolysis. This chain is Enolase, found in Bifidobacterium longum (strain DJO10A).